The following is a 1274-amino-acid chain: Enamelin (1274 aa).

Positions 1–38 (MLLLQCRNPTSPPKPCGLVPNVKMSLLVFLGLLGVSAA) are cleaved as a signal peptide. Positions 103–115 (PVPNGWQQPPMPN) are enriched in pro residues. 5 disordered regions span residues 103-413 (PVPN…VGAN), 476-610 (IGAN…NNPN), 668-700 (PFQSETKKPELKHGTHQPAYPKKIPSPTRKHFP), 712-734 (LPPLKEDYGRQDENLRHPSYGSR), and 753-814 (YIKS…EEMN). Polar residues predominate over residues 117 to 127 (PSKTDQTQETA). The segment covering 128-142 (KPNQTNPQEPQPQKQ) has biased composition (low complexity). N-linked (GlcNAc...) asparagine glycosylation occurs at asparagine 130. Positions 143–158 (PLKEPPNEAARAKDDA) are enriched in basic and acidic residues. The segment covering 174-185 (YPQPPWPIPQRG) has biased composition (pro residues). A phosphoserine mark is found at serine 196 and serine 219. Residues 225-239 (DYEKPKEKDPPKPED) are compositionally biased toward basic and acidic residues. Over residues 249-272 (ASTNSTVPDANATQSIPEGGNDTS) the composition is skewed to polar residues. Residues asparagine 252, asparagine 259, and asparagine 269 are each glycosylated (N-linked (GlcNAc...) asparagine). Residues 273-287 (PIGNTGPGPNAGNNP) are compositionally biased toward low complexity. Asparagine 300 carries an N-linked (GlcNAc...) asparagine glycan. Over residues 318 to 330 (PNIYENYPYPNYP) the composition is skewed to low complexity. Composition is skewed to polar residues over residues 331-344 (SERQWQTTGTQGPR), 486-503 (SIGTNPAANKPSIGTNPA), 522-549 (TNPSSNQPFLRSNQASNKPFMRSNQASN), and 565-574 (VTVSHNMKTQ). The span at 575–587 (NPKEKSLGQKERT) shows a compositional bias: basic and acidic residues. Residues 588–598 (VTPTKDASNPW) are compositionally biased toward polar residues. The segment covering 715–727 (LKEDYGRQDENLR) has biased composition (basic and acidic residues). The segment covering 753–766 (YIKSNPWDKSSPST) has biased composition (polar residues). Over residues 787 to 801 (QYNEEDPIDPNEDES) the composition is skewed to acidic residues. Asparagine 1066 carries an N-linked (GlcNAc...) asparagine glycan. Disordered stretches follow at residues 1071–1097 (KLTAESPNPSPFGDGVPTVRKNTPYSG) and 1109–1128 (SEASSSQPKNTPCLKSDLGG).

Phosphorylated by FAM20C in vitro. In terms of tissue distribution, expressed in developing teeth.

It localises to the secreted. The protein resides in the extracellular space. Its subcellular location is the extracellular matrix. In terms of biological role, involved in the mineralization and structural organization of enamel. Involved in the extension of enamel during the secretory stage of dental enamel formation. The sequence is that of Enamelin (Enam) from Mus musculus (Mouse).